The primary structure comprises 1400 residues: DNA-directed RNA polymerase subunit beta' (1400 aa).

Residues cysteine 71, cysteine 73, cysteine 86, and cysteine 89 each coordinate Zn(2+). Aspartate 462, aspartate 464, and aspartate 466 together coordinate Mg(2+). Zn(2+)-binding residues include cysteine 810, cysteine 884, cysteine 891, and cysteine 894.

Belongs to the RNA polymerase beta' chain family. In terms of assembly, the RNAP catalytic core consists of 2 alpha, 1 beta, 1 beta' and 1 omega subunit. When a sigma factor is associated with the core the holoenzyme is formed, which can initiate transcription. Mg(2+) is required as a cofactor. The cofactor is Zn(2+).

It carries out the reaction RNA(n) + a ribonucleoside 5'-triphosphate = RNA(n+1) + diphosphate. Functionally, DNA-dependent RNA polymerase catalyzes the transcription of DNA into RNA using the four ribonucleoside triphosphates as substrates. This chain is DNA-directed RNA polymerase subunit beta', found in Rhodopseudomonas palustris (strain TIE-1).